We begin with the raw amino-acid sequence, 184 residues long: Ribosome-recycling factor (184 aa).

Belongs to the RRF family.

It localises to the cytoplasm. Its function is as follows. Responsible for the release of ribosomes from messenger RNA at the termination of protein biosynthesis. May increase the efficiency of translation by recycling ribosomes from one round of translation to another. The chain is Ribosome-recycling factor from Borrelia recurrentis (strain A1).